The chain runs to 564 residues: Pyranose 2-oxidase (564 aa).

A propeptide spanning residues 1-25 (MPIRLSKEKINDLLQRSQGDLTSSQ) is cleaved from the precursor. At His-158 the chain carries Tele-8alpha-FAD histidine. Residues Gln-392 and His-394 each coordinate substrate. His-498 serves as the catalytic Proton acceptor. The active site involves Asn-541.

The protein belongs to the GMC oxidoreductase family. As to quaternary structure, homotetramer. FAD serves as cofactor.

It catalyses the reaction D-glucose + O2 = 2-dehydro-D-glucose + H2O2. Its function is as follows. Catalyzes the oxidation of various aldopyranoses and disaccharides on carbon-2 to the corresponding 2-keto sugars concomitant with the reduction of O(2) to H(2)O(2). The preferred substrate is D-glucose which is converted to 2-dehydro-D-glucose. Acts also on D-xylose, L-sorbose, D-galactose and 1,5-anhydroglucitol, a diagnostic marker of diabetes mellitus. In Tricholoma matsutake (Matsutake mushroom), this protein is Pyranose 2-oxidase (p2ox).